Reading from the N-terminus, the 139-residue chain is Acidic phospholipase A2 Ts-A4 (139 aa).

Residues 1-16 form the signal peptide; that stretch reads MRTLWILAVLLVGVEG. 7 cysteine pairs are disulfide-bonded: cysteine 42–cysteine 132, cysteine 44–cysteine 60, cysteine 59–cysteine 111, cysteine 65–cysteine 139, cysteine 66–cysteine 104, cysteine 73–cysteine 97, and cysteine 91–cysteine 102. Ca(2+) is bound by residues tyrosine 43, glycine 45, and glycine 47. Residue histidine 63 is part of the active site. Aspartate 64 lines the Ca(2+) pocket. Aspartate 105 is an active-site residue.

It depends on Ca(2+) as a cofactor. As to expression, expressed by the venom gland.

The protein resides in the secreted. It catalyses the reaction a 1,2-diacyl-sn-glycero-3-phosphocholine + H2O = a 1-acyl-sn-glycero-3-phosphocholine + a fatty acid + H(+). In terms of biological role, PLA2 catalyzes the calcium-dependent hydrolysis of the 2-acyl groups in 3-sn-phosphoglycerides. This is Acidic phospholipase A2 Ts-A4 from Trimeresurus stejnegeri (Chinese green tree viper).